The sequence spans 110 residues: Protein YcgL (110 aa).

The 85-residue stretch at 14-98 (MFCVIYRSSK…PPEDLLKQHL (85 aa)) folds into the YcgL domain.

The sequence is that of Protein YcgL from Salmonella arizonae (strain ATCC BAA-731 / CDC346-86 / RSK2980).